Consider the following 296-residue polypeptide: Light-independent protochlorophyllide reductase iron-sulfur ATP-binding protein (296 aa).

A compositionally biased stretch (basic and acidic residues) spans 1-11; that stretch reads MTSTITRKEDG. Residues 1–20 are disordered; that stretch reads MTSTITRKEDGEGSVQVKQD. ATP contacts are provided by residues 39-44 and Lys-68; that span reads GIGKST. Residue Ser-43 coordinates Mg(2+). Residues Cys-124 and Cys-158 each coordinate [4Fe-4S] cluster. Residue 209-210 coordinates ATP; sequence NR.

Belongs to the NifH/BchL/ChlL family. Homodimer. Protochlorophyllide reductase is composed of three subunits; ChlL, ChlN and ChlB. [4Fe-4S] cluster is required as a cofactor.

It carries out the reaction chlorophyllide a + oxidized 2[4Fe-4S]-[ferredoxin] + 2 ADP + 2 phosphate = protochlorophyllide a + reduced 2[4Fe-4S]-[ferredoxin] + 2 ATP + 2 H2O. It functions in the pathway porphyrin-containing compound metabolism; chlorophyll biosynthesis (light-independent). Functionally, component of the dark-operative protochlorophyllide reductase (DPOR) that uses Mg-ATP and reduced ferredoxin to reduce ring D of protochlorophyllide (Pchlide) to form chlorophyllide a (Chlide). This reaction is light-independent. The L component serves as a unique electron donor to the NB-component of the complex, and binds Mg-ATP. This is Light-independent protochlorophyllide reductase iron-sulfur ATP-binding protein from Prochlorococcus marinus (strain NATL1A).